Here is a 149-residue protein sequence, read N- to C-terminus: Calmodulin (149 aa).

Residue A2 is modified to N-acetylalanine. EF-hand domains lie at E8–N43, P44–D79, D81–K116, and L117–K149. Ca(2+) is bound by residues D21, D23, D25, T27, E32, D57, D59, N61, T63, E68, D94, D96, N98, and E105. K116 carries the N6,N6,N6-trimethyllysine modification. Residues D130, D132, D134, H136, and E141 each contribute to the Ca(2+) site.

It belongs to the calmodulin family.

Its function is as follows. Calmodulin mediates the control of a large number of enzymes, ion channels and other proteins by Ca(2+). Among the enzymes to be stimulated by the calmodulin-Ca(2+) complex are a number of protein kinases and phosphatases. This chain is Calmodulin, found in Stylonychia lemnae (Ciliate).